A 311-amino-acid chain; its full sequence is 1,4-dihydroxy-2-naphthoate octaprenyltransferase (311 aa).

Helical transmembrane passes span 31–51 (LTASFVPVLLGTVLAMFYVKV), 53–73 (LLLFLAMLFSCLWIQIATNLF), 104–126 (TILQLALASYGIAILLGVYICAS), 131–153 (LALIGLVGMAIGYLYTGGPLPIA), 157–177 (FGELFSGICMGSVFVLISFFI), 182–202 (INMQSILISIPIAILVGAINL), 220–240 (LAILMGHKGAVTLLAASFAVA), 242–262 (IWVVGLVITGAASPWLFVVFL), and 290–310 (TAQTNTFFGFLLSIGLLISYF).

Belongs to the MenA family. Type 1 subfamily.

Its subcellular location is the cell membrane. The catalysed reaction is an all-trans-polyprenyl diphosphate + 1,4-dihydroxy-2-naphthoate + H(+) = a 2-demethylmenaquinol + CO2 + diphosphate. Its pathway is quinol/quinone metabolism; menaquinone biosynthesis; menaquinol from 1,4-dihydroxy-2-naphthoate: step 1/2. In terms of biological role, conversion of 1,4-dihydroxy-2-naphthoate (DHNA) to demethylmenaquinone (DMK). The polypeptide is 1,4-dihydroxy-2-naphthoate octaprenyltransferase (Bacillus subtilis (strain 168)).